The primary structure comprises 670 residues: Auxin response factor 16 (670 aa).

Residues 120–222 (FAKTLTQSDA…DLCVGIRRAK (103 aa)) constitute a DNA-binding region (TF-B3). A compositionally biased stretch (polar residues) spans 545–557 (KTQISSGGSNQNG). Residues 545–579 (KTQISSGGSNQNGVAGREFSSSDEGSPCSKKVHDA) form a disordered region. One can recognise a PB1 domain in the interval 584–664 (TGHCKVFMES…RRLTILTEQG (81 aa)).

The protein belongs to the ARF family. Homodimers and heterodimers.

The protein localises to the nucleus. In terms of biological role, auxin response factors (ARFs) are transcriptional factors that bind specifically to the DNA sequence 5'-TGTCTC-3' found in the auxin-responsive promoter elements (AuxREs). Could act as transcriptional activator or repressor. Formation of heterodimers with Aux/IAA proteins may alter their ability to modulate early auxin response genes expression. This Arabidopsis thaliana (Mouse-ear cress) protein is Auxin response factor 16 (ARF16).